The primary structure comprises 249 residues: AA9 family lytic polysaccharide monooxygenase A (249 aa).

An N-terminal signal peptide occupies residues 1–21; sequence MALSKIAALSTILASASLVAG. His-22 serves as a coordination point for Cu(2+). Position 22 is a methylhistidine (His-22). Residues Asn-34 and Asn-80 are each glycosylated (N-linked (GlcNAc...) asparagine). Disulfide bonds link Cys-77–Cys-199 and Cys-118–Cys-122. A Cu(2+)-binding site is contributed by His-107. Positions 185 and 194 each coordinate O2. Tyr-196 contacts Cu(2+).

It belongs to the polysaccharide monooxygenase AA9 family. The cofactor is Cu(2+). In terms of processing, the catalytically essential N-terminal histidine His-22 is post-translationally modified by methylation to prevent protonation of the histidine side chain, and protect the critical active site of the enzyme from oxidative damage.

The protein localises to the secreted. The enzyme catalyses [(1-&gt;4)-beta-D-glucosyl]n+m + reduced acceptor + O2 = 4-dehydro-beta-D-glucosyl-[(1-&gt;4)-beta-D-glucosyl]n-1 + [(1-&gt;4)-beta-D-glucosyl]m + acceptor + H2O.. Functionally, lytic polysaccharide monooxygenase (LPMO) that exhibits a mixed C1/C4 oxidative cleavage activity on cellulose and xyloglucan. Catalysis by LPMOs requires the reduction of the active-site copper from Cu(II) to Cu(I) by a reducing agent and H(2)O(2) or O(2) as a cosubstrate. Shows a higher boosting effect with cellulases on the enzymatic saccharification of complex lignocellulosic substrates associated with xyloglucan than on the lignocellulosic substrates without xyloglucan. The oxidative cleavage of xyloglucan by LPMO9A may facilitate to open up the sterical hindrance of cellulose by xyloglucan and thereby increase accessibility for cellulase to lignocellulosic substrates. This chain is AA9 family lytic polysaccharide monooxygenase A, found in Penicillium parvum (Eupenicillium parvum).